The following is a 121-amino-acid chain: LOB domain-containing protein 24 (121 aa).

The 102-residue stretch at 4-105 (KRCAACKYLR…NELAKTQAEI (102 aa)) folds into the LOB domain.

The protein belongs to the LOB domain-containing protein family.

The protein is LOB domain-containing protein 24 (LBD24) of Arabidopsis thaliana (Mouse-ear cress).